A 1818-amino-acid chain; its full sequence is U3 small nucleolar RNA-associated protein 10 (1818 aa).

A helical transmembrane segment spans residues 568 to 588; that stretch reads TDFYLLIPLILLALFDNSKLI. The stretch at 1778–1816 is one HEAT repeat; it reads LVPYIAELLEDDDEEVEMEVRRGLVRVIENVLGEPLDRY.

The protein belongs to the HEATR1/UTP10 family. As to quaternary structure, component of the ribosomal small subunit (SSU) processome.

It localises to the nucleus. Its subcellular location is the nucleolus. The protein localises to the membrane. In terms of biological role, involved in nucleolar processing of pre-18S ribosomal RNA. Involved in ribosome biosynthesis. The protein is U3 small nucleolar RNA-associated protein 10 of Candida albicans (strain SC5314 / ATCC MYA-2876) (Yeast).